Reading from the N-terminus, the 509-residue chain is Histidine--tRNA ligase, cytoplasmic (509 aa).

Ala-2 is subject to N-acetylalanine. The 57-residue stretch at 3–59 (ERAALEELVKLQGERVRGLKQQKASAELIEEEVAKLLKLKAQLGPDESKQKFVLKTP) folds into the WHEP-TRS domain. Ser-66 carries the phosphoserine modification. L-histidine contacts are provided by residues 130–132 (DLT), Arg-157, Gln-173, Asp-177, Arg-326, and 330–331 (YY). Ser-356 carries the post-translational modification Phosphoserine.

It belongs to the class-II aminoacyl-tRNA synthetase family. In terms of assembly, homodimer.

The protein localises to the cytoplasm. It catalyses the reaction tRNA(His) + L-histidine + ATP = L-histidyl-tRNA(His) + AMP + diphosphate + H(+). Catalyzes the ATP-dependent ligation of histidine to the 3'-end of its cognate tRNA, via the formation of an aminoacyl-adenylate intermediate (His-AMP). Plays a role in axon guidance. The chain is Histidine--tRNA ligase, cytoplasmic (HARS1) from Pongo abelii (Sumatran orangutan).